The sequence spans 260 residues: Acetylglutamate kinase (260 aa).

Substrate is bound by residues 46 to 47, Arg68, and Asn160; that span reads GG.

This sequence belongs to the acetylglutamate kinase family. ArgB subfamily.

The protein resides in the cytoplasm. It catalyses the reaction N-acetyl-L-glutamate + ATP = N-acetyl-L-glutamyl 5-phosphate + ADP. It functions in the pathway amino-acid biosynthesis; L-arginine biosynthesis; N(2)-acetyl-L-ornithine from L-glutamate: step 2/4. Its function is as follows. Catalyzes the ATP-dependent phosphorylation of N-acetyl-L-glutamate. This is Acetylglutamate kinase from Shewanella sp. (strain W3-18-1).